We begin with the raw amino-acid sequence, 281 residues long: Putative thiosulfate sulfurtransferase (281 aa).

Rhodanese domains lie at 18 to 125 (NTDG…ELTK) and 154 to 274 (AIGN…VPIE). Cys233 (cysteine persulfide intermediate) is an active-site residue. A substrate-binding site is contributed by Arg238.

It catalyses the reaction thiosulfate + hydrogen cyanide = thiocyanate + sulfite + 2 H(+). Its function is as follows. May be a sulfotransferase involved in the formation of thiosulfate. The sequence is that of Putative thiosulfate sulfurtransferase (cysA) from Saccharopolyspora erythraea (Streptomyces erythraeus).